The primary structure comprises 184 residues: UPF0301 protein Sden_2674 (184 aa).

It belongs to the UPF0301 (AlgH) family.

The protein is UPF0301 protein Sden_2674 of Shewanella denitrificans (strain OS217 / ATCC BAA-1090 / DSM 15013).